A 502-amino-acid chain; its full sequence is MLREFREQRIKEIEQLKRKNINPYPNRFDKTHTSEMIKKEFEGLNPGEVKDDVFVSTAGRIMSLRKHGKSAFFHIKDFYGRIQAYIRKDVVGEEAYEFFKEHIAIGDIVGVKGNVFKSKTGEITILIKEIKLLNKPLRPMPEKWHGIKDKEVLYRQRYVDMIANDDTLNRFKVRFEVIKLIRDFLNSKGFIEVETPILEYVTGGASARPFVTHLNVFDIEMYMRIATELYLKRFIVGGFEKVYELGKNFRNEGLSYKHHPEFTSIEIYQAYADYEDMMNLTEELFVYIVEKLFGTTKIKYQNVELDFSRPWRRIKMRDFIKEHLGVDILEDSMGRMMDVLEEHGVEVEIRDKGHMIEKLWDLVEDKVVQPTFLLEHPVEISPLAKKHREDPRVTERFELIIYGREMANAFSELNDPVDQYERFLKQVELREAGDEEAQMMDRDFVRALEYGMPPTGGLGIGIDRLVMLLTNSATIRDVIAFPLVRLKSFEEEELDIEGGSQE.

Mg(2+)-binding residues include Glu-398 and Glu-405.

It belongs to the class-II aminoacyl-tRNA synthetase family. Homodimer. The cofactor is Mg(2+).

The protein localises to the cytoplasm. It carries out the reaction tRNA(Lys) + L-lysine + ATP = L-lysyl-tRNA(Lys) + AMP + diphosphate. The protein is Lysine--tRNA ligase of Thermosipho melanesiensis (strain DSM 12029 / CIP 104789 / BI429).